We begin with the raw amino-acid sequence, 232 residues long: tRNA1(Val) (adenine(37)-N6)-methyltransferase (232 aa).

Belongs to the methyltransferase superfamily. tRNA (adenine-N(6)-)-methyltransferase family.

The protein localises to the cytoplasm. It carries out the reaction adenosine(37) in tRNA1(Val) + S-adenosyl-L-methionine = N(6)-methyladenosine(37) in tRNA1(Val) + S-adenosyl-L-homocysteine + H(+). In terms of biological role, specifically methylates the adenine in position 37 of tRNA(1)(Val) (anticodon cmo5UAC). This Pseudoalteromonas translucida (strain TAC 125) protein is tRNA1(Val) (adenine(37)-N6)-methyltransferase.